The chain runs to 276 residues: Aquaporin-6 (276 aa).

Residues 1–22 are Cytoplasmic-facing; sequence MEPGLCNRAYLLVGGLWTAISK. Residues 23 to 43 traverse the membrane as a helical segment; the sequence is ALFAEFLATGLYVFFGVGSVL. Over 44-51 the chain is Extracellular; it reads PWPVALPS. The helical transmembrane segment at 52–70 threads the bilayer; it reads VLQVAITFNLATATAVQIS. Topologically, residues 71-75 are cytoplasmic; the sequence is WKTSG. An intramembrane region (discontinuously helical) is located at residues 76–85; sequence AHANPAVTLA. An NPA 1 motif is present at residues 79 to 81; the sequence is NPA. Topologically, residues 86-96 are cytoplasmic; sequence YLVGSHISLPR. A helical transmembrane segment spans residues 97 to 118; the sequence is AVAYIAAQLAGATVGAALLYGV. Residues 119–138 lie on the Extracellular side of the membrane; it reads TPGGVRETLGVNVVHNSTST. Asn134 is a glycosylation site (N-linked (GlcNAc...) asparagine). The helical transmembrane segment at 139-159 threads the bilayer; that stretch reads GQAVAVELVLTLQLVLCVFAS. At 160–165 the chain is on the cytoplasmic side; it reads MDSRQT. The chain crosses the membrane as a helical span at residues 166–185; that stretch reads LGSPAAMIGTSVALGHLIGI. At 186 to 189 the chain is on the extracellular side; it reads YFTG. The segment at residues 190-202 is an intramembrane region (discontinuously helical); the sequence is CSMNPARSFGPAV. Positions 193–195 match the NPA 2 motif; the sequence is NPA. Over 203–210 the chain is Extracellular; sequence IVGKFAVH. The chain crosses the membrane as a helical span at residues 211–231; it reads WIFWVGPLTGAVLASLIYNFI. The Cytoplasmic segment spans residues 232-276; sequence LFPDTKTVAQRLAILVGTTKVEKVVDLEPQKKESQTNSEDTEVSV.

Belongs to the MIP/aquaporin (TC 1.A.8) family. In terms of assembly, homotetramer; each monomer provides an independent solute pore. In terms of processing, N-glycosylated. In terms of tissue distribution, kidney.

Its subcellular location is the cytoplasmic vesicle membrane. The catalysed reaction is nitrate(in) = nitrate(out). It catalyses the reaction iodide(out) = iodide(in). The enzyme catalyses bromide(in) = bromide(out). It carries out the reaction chloride(in) = chloride(out). The catalysed reaction is Na(+)(in) = Na(+)(out). It catalyses the reaction H2O(in) = H2O(out). The enzyme catalyses CO2(out) = CO2(in). It carries out the reaction NH4(+)(in) = NH4(+)(out). With respect to regulation, activated by mercury and pH-gated, anion permeability is observed at pH 5.5 and increases markedly at pH 4.0. Selectivity for chloride increases at low pH. The water channel activity is stimulated by mercury by opposition to other aquaporins. Aquaporins form homotetrameric transmembrane channels, with each monomer independently mediating water transport across the plasma membrane along its osmotic gradient. Unlike classical aquaporins, AQP6 is an intracellular channel with selective anion permeability, particularly for nitrate, and exhibits very low water permeability. It may also facilitate the transport of gases, such as CO2 and NH4(+), as demonstrated in vitro. The protein is Aquaporin-6 of Rattus norvegicus (Rat).